The sequence spans 59 residues: uncharacterized protein (59 aa).

The interval 1–59 is disordered; sequence MAKKPGENTGKNGGIYQEVGPRGGKKDNFATVKDNERLPPTTKPGNGWVLDKRTPDSKK. Basic and acidic residues-rich tracts occupy residues 24 to 37 and 50 to 59; these read GKKDNFATVKDNER and LDKRTPDSKK.

This is an uncharacterized protein from Salmonella phage P22 (Bacteriophage P22).